The primary structure comprises 642 residues: Threonine--tRNA ligase (642 aa).

Residues 1-61 (MPIITLPDGS…STDSDLSIIT (61 aa)) enclose the TGS domain. The tract at residues 243-534 (DHRKIGKQLD…LIEEYAGKFP (292 aa)) is catalytic. Zn(2+)-binding residues include Cys-334, His-385, and His-511.

This sequence belongs to the class-II aminoacyl-tRNA synthetase family. In terms of assembly, homodimer. Zn(2+) serves as cofactor.

Its subcellular location is the cytoplasm. It catalyses the reaction tRNA(Thr) + L-threonine + ATP = L-threonyl-tRNA(Thr) + AMP + diphosphate + H(+). Catalyzes the attachment of threonine to tRNA(Thr) in a two-step reaction: L-threonine is first activated by ATP to form Thr-AMP and then transferred to the acceptor end of tRNA(Thr). Also edits incorrectly charged L-seryl-tRNA(Thr). The protein is Threonine--tRNA ligase of Shewanella denitrificans (strain OS217 / ATCC BAA-1090 / DSM 15013).